The chain runs to 78 residues: Large ribosomal subunit protein bL28 (78 aa).

Residues 1-21 (MSRVCQVTGKKPMVGNNRSHA) form a disordered region.

It belongs to the bacterial ribosomal protein bL28 family.

The chain is Large ribosomal subunit protein bL28 from Shewanella woodyi (strain ATCC 51908 / MS32).